A 211-amino-acid polypeptide reads, in one-letter code: Cytidylate kinase (211 aa).

Residue 7–15 (GPAASGKGT) participates in ATP binding.

It belongs to the cytidylate kinase family. Type 1 subfamily.

It localises to the cytoplasm. The catalysed reaction is CMP + ATP = CDP + ADP. It carries out the reaction dCMP + ATP = dCDP + ADP. This is Cytidylate kinase from Rhodopseudomonas palustris (strain BisA53).